Consider the following 510-residue polypeptide: Beta-glucosidase 40 (510 aa).

The signal sequence occupies residues 1 to 29 (MAHRRLIMTMTKMMMMVTMMMMMDKTCIC). Residues Gln51, His152, and 197-198 (NE) contribute to the a beta-D-glucoside site. Catalysis depends on Glu198, which acts as the Proton donor. Cys217 and Cys225 form a disulfide bridge. Asn229 and Asn278 each carry an N-linked (GlcNAc...) asparagine glycan. Tyr341 serves as a coordination point for a beta-D-glucoside. An N-linked (GlcNAc...) asparagine glycan is attached at Asn349. A beta-D-glucoside contacts are provided by residues Glu414, Trp464, 471–472 (EW), and Phe480. Glu414 functions as the Nucleophile in the catalytic mechanism. Asn507 carries N-linked (GlcNAc...) asparagine glycosylation.

This sequence belongs to the glycosyl hydrolase 1 family.

The catalysed reaction is Hydrolysis of terminal, non-reducing beta-D-glucosyl residues with release of beta-D-glucose.. In Arabidopsis thaliana (Mouse-ear cress), this protein is Beta-glucosidase 40.